The sequence spans 121 residues: Amelogenin (121 aa).

2 disordered regions span residues 1 to 20 (LHHQ…HALQ) and 32 to 121 (QPMQ…WPAT). Over residues 48–58 (SVTPTQHHQSN) the composition is skewed to polar residues. Over residues 59–71 (LPQPAQQPFQPQV) the composition is skewed to low complexity. Over residues 85 to 111 (PAHPMPPMPQPPLPPMFPMQPLPPLLP) the composition is skewed to pro residues.

The protein belongs to the amelogenin family.

Its subcellular location is the secreted. It is found in the extracellular space. The protein resides in the extracellular matrix. Its function is as follows. Plays a role in the biomineralization of teeth. Seems to regulate the formation of crystallites during the secretory stage of tooth enamel development. Thought to play a major role in the structural organization and mineralization of developing enamel. In Ornithorhynchus anatinus (Duckbill platypus), this protein is Amelogenin (AMEL).